The chain runs to 510 residues: NAD(P)H-quinone oxidoreductase subunit 2 A, chloroplastic (510 aa).

Helical transmembrane passes span 24 to 44 (LLLF…GLIL), 57 to 77 (IPWL…ALLF), 99 to 119 (IFQF…VEYI), 124 to 144 (MAIT…MFLC), 149 to 169 (LITI…LSGY), 183 to 203 (YLLM…WLYG), 227 to 247 (PGIS…LSPA), 295 to 315 (WHLL…LIAI), 323 to 343 (MLAY…IVGD), 354 to 374 (YMLF…LFGL), 395 to 415 (ALSL…AGFF), 418 to 438 (LYLF…IGLL), and 484 to 504 (MIVC…IIAI).

It belongs to the complex I subunit 2 family. As to quaternary structure, NDH is composed of at least 16 different subunits, 5 of which are encoded in the nucleus.

The protein resides in the plastid. The protein localises to the chloroplast thylakoid membrane. The catalysed reaction is a plastoquinone + NADH + (n+1) H(+)(in) = a plastoquinol + NAD(+) + n H(+)(out). It carries out the reaction a plastoquinone + NADPH + (n+1) H(+)(in) = a plastoquinol + NADP(+) + n H(+)(out). NDH shuttles electrons from NAD(P)H:plastoquinone, via FMN and iron-sulfur (Fe-S) centers, to quinones in the photosynthetic chain and possibly in a chloroplast respiratory chain. The immediate electron acceptor for the enzyme in this species is believed to be plastoquinone. Couples the redox reaction to proton translocation, and thus conserves the redox energy in a proton gradient. The protein is NAD(P)H-quinone oxidoreductase subunit 2 A, chloroplastic of Panax ginseng (Korean ginseng).